Consider the following 508-residue polypeptide: Cytochrome P450 4A12 (508 aa).

Helical transmembrane passes span 10 to 30 and 120 to 140; these read IFPGSILGFLQIATVLTVLLL and FLAPWIGYGLLLLNGQTWFQH. Glu319 is a heme binding site. Ser438 is subject to Phosphoserine. Position 455 (Cys455) interacts with heme.

The protein belongs to the cytochrome P450 family. The cofactor is heme. As to expression, expressed at proximal straight tubules and preglomerular arteries of the outer medulla as well in the cortex regions of kidney (at protein level).

The protein localises to the endoplasmic reticulum membrane. It is found in the microsome membrane. The enzyme catalyses an organic molecule + reduced [NADPH--hemoprotein reductase] + O2 = an alcohol + oxidized [NADPH--hemoprotein reductase] + H2O + H(+). It catalyses the reaction dodecanoate + reduced [NADPH--hemoprotein reductase] + O2 = 12-hydroxydodecanoate + oxidized [NADPH--hemoprotein reductase] + H2O + H(+). It carries out the reaction dodecanoate + reduced [NADPH--hemoprotein reductase] + O2 = (11R)-hydroxydodecanoate + oxidized [NADPH--hemoprotein reductase] + H2O + H(+). The catalysed reaction is (5Z,8Z,11Z,14Z)-eicosatetraenoate + reduced [NADPH--hemoprotein reductase] + O2 = 20-hydroxy-(5Z,8Z,11Z,14Z)-eicosatetraenoate + oxidized [NADPH--hemoprotein reductase] + H2O + H(+). The enzyme catalyses prostaglandin A1 + reduced [NADPH--hemoprotein reductase] + O2 = 20-hydroxy prostaglandin A1 + oxidized [NADPH--hemoprotein reductase] + H2O + H(+). It functions in the pathway lipid metabolism; fatty acid metabolism. With respect to regulation, activated by cytochrome b5 and phosphatidylserine. In terms of biological role, a cytochrome P450 monooxygenase involved in the metabolism of fatty acids. Catalyzes predominantly the oxidation of the terminal carbon (omega-oxidation) of saturated and unsaturated fatty acids. May act as a major omega-hydroxylase for dodecanoic (lauric) acid in kidney. At preglomerular arteries, may participate in omega-hydroxylation of (5Z,8Z,11Z,14Z)-eicosatetraenoic acid (arachidonate) to 20-hydroxyeicosatetraenoic acid (20-HETE), a signaling molecule acting both as vasoconstrictive and natriuretic with overall effect on arterial blood pressure. Can also catalyze the oxidation of the penultimate carbon (omega-1 oxidation) of fatty acids with lower efficiency, displaying a preference for the (R)-stereoisomer. Mechanistically, uses molecular oxygen inserting one oxygen atom into a substrate, and reducing the second into a water molecule, with two electrons provided by NADPH via cytochrome P450 reductase (NADPH--hemoprotein reductase). The chain is Cytochrome P450 4A12 (Cyp4a12) from Rattus norvegicus (Rat).